The primary structure comprises 347 residues: NADH-ubiquinone oxidoreductase chain 2 (347 aa).

10 helical membrane-spanning segments follow: residues 3–23 (PLIL…VMMS), 25–45 (HWLM…PLLM), 59–79 (YFLT…INLL), 96–116 (IIMT…FWVP), 148–170 (GINL…WGGL), 178–198 (ILAY…AFNP), 200–220 (MTLL…MLFM), 247–267 (IMLS…WMII), 276–296 (ITLA…YMRL), and 326–346 (LPML…ITLL).

This sequence belongs to the complex I subunit 2 family. As to quaternary structure, core subunit of respiratory chain NADH dehydrogenase (Complex I) which is composed of 45 different subunits. Interacts with TMEM242.

Its subcellular location is the mitochondrion inner membrane. It carries out the reaction a ubiquinone + NADH + 5 H(+)(in) = a ubiquinol + NAD(+) + 4 H(+)(out). Its function is as follows. Core subunit of the mitochondrial membrane respiratory chain NADH dehydrogenase (Complex I) which catalyzes electron transfer from NADH through the respiratory chain, using ubiquinone as an electron acceptor. Essential for the catalytic activity and assembly of complex I. The polypeptide is NADH-ubiquinone oxidoreductase chain 2 (Saccopteryx leptura (Lesser sac-winged bat)).